Consider the following 141-residue polypeptide: MAKKVEKLVKLQIPAGKATPAPPVGPALGQAGINIMGFTKEFNARTADQAGMIIPVVITVYEDKSFDFITKTPPAAVLLKKAAGVEKGSGTPNKTKVATVTRAQVQEIAETKMPDLNAANLESAMRMIEGTARSMGFTITD.

Belongs to the universal ribosomal protein uL11 family. In terms of assembly, part of the ribosomal stalk of the 50S ribosomal subunit. Interacts with L10 and the large rRNA to form the base of the stalk. L10 forms an elongated spine to which L12 dimers bind in a sequential fashion forming a multimeric L10(L12)X complex. In terms of processing, one or more lysine residues are methylated.

In terms of biological role, forms part of the ribosomal stalk which helps the ribosome interact with GTP-bound translation factors. This Streptococcus uberis (strain ATCC BAA-854 / 0140J) protein is Large ribosomal subunit protein uL11.